Reading from the N-terminus, the 84-residue chain is RNA-binding protein Hfq (84 aa).

In terms of domain architecture, Sm spans 11–71 (DTFLNFVRKN…ISTIMPGAPI (61 aa)).

It belongs to the Hfq family. Homohexamer.

Its function is as follows. RNA chaperone that binds small regulatory RNA (sRNAs) and mRNAs to facilitate mRNA translational regulation in response to envelope stress, environmental stress and changes in metabolite concentrations. Also binds with high specificity to tRNAs. In Beijerinckia indica subsp. indica (strain ATCC 9039 / DSM 1715 / NCIMB 8712), this protein is RNA-binding protein Hfq.